An 819-amino-acid polypeptide reads, in one-letter code: DNA replication licensing factor Mcm3 (819 aa).

The region spanning 290–496 (IFELLSKSLA…DVDQMISDHV (207 aa)) is the MCM domain. 5 residues coordinate ADP: Gln-348, Leu-388, Glu-389, Ala-390, and Ala-392. An Arginine finger motif is present at residues 472-475 (SRFD). A Phosphoserine modification is found at Ser-522. Tyr-538 bears the Phosphotyrosine mark. The disordered stretch occupies residues 655–717 (DRPSKRRRNS…DAGDLTRRET (63 aa)). Phosphoserine occurs at positions 664, 666, 680, and 682. Residues Thr-690 and Thr-692 each carry the phosphothreonine modification. Residues Ser-697, Ser-735, and Ser-739 each carry the phosphoserine modification.

The protein belongs to the MCM family. Component of the Mcm2-7 complex. The complex forms a toroidal hexameric ring with the proposed subunit order Mcm2-Mcm6-Mcm4-Mcm7-Mcm3-Mcm5.

The protein localises to the nucleus. Its subcellular location is the chromosome. The enzyme catalyses ATP + H2O = ADP + phosphate + H(+). Functionally, acts as a component of the Mcm2-7 complex (Mcm complex) (Mcm complex) which is the putative replicative helicase essential for 'once per cell cycle' DNA replication initiation and elongation in eukaryotic cells. Core component of CDC45-MCM-GINS (CMG) helicase, the molecular machine that unwinds template DNA during replication, and around which the replisome is built. The active ATPase sites in the Mcm2-7 ring are formed through the interaction surfaces of two neighboring subunits such that a critical structure of a conserved arginine finger motif is provided in trans relative to the ATP-binding site of the Walker A box of the adjacent subunit. The six ATPase active sites, however, are likely to contribute differentially to the complex helicase activity. The chain is DNA replication licensing factor Mcm3 (Mcm3) from Drosophila melanogaster (Fruit fly).